The sequence spans 241 residues: MIINAKGPASFAEKYIVRSIWENKFPPGSILPAERELSELIGVTRTTLREVLQRLARDGWLKIQHGKPTRVNNFWETSGLNILETIADLNPEGFPVLVDQLLSARTNVSAIYFRGALRNSPDTAVEVLAQIHQLEDTAESFAEYDYLLHHTLAFSSGNPLYVLILNGFKGLYSRVGRYYFSSPEARQLALNFYKELEVLAKAKNYVDVPALMRTYGINSGKMWLQLRDDMPTSIALQEANS.

The HTH gntR-type domain occupies 6 to 74; the sequence is KGPASFAEKY…HGKPTRVNNF (69 aa). Residues 34-53 constitute a DNA-binding region (H-T-H motif); the sequence is ERELSELIGVTRTTLREVLQ.

Homodimer.

Its subcellular location is the cytoplasm. Multifunctional regulator of fatty acid metabolism. This chain is Fatty acid metabolism regulator protein, found in Shewanella sp. (strain MR-4).